A 464-amino-acid chain; its full sequence is Elongation factor 1-alpha (464 aa).

The tr-type G domain occupies 5–242; sequence KTHINIVVIG…DSVVPPQRPT (238 aa). Residues 14-21, 91-95, and 153-156 each bind GTP; these read GHVDSGKS, DAPGH, and NKMD. 5-glutamyl glycerylphosphorylethanolamine is present on residues Glu301 and Glu374.

It belongs to the TRAFAC class translation factor GTPase superfamily. Classic translation factor GTPase family. EF-Tu/EF-1A subfamily.

It is found in the cytoplasm. Functionally, this protein promotes the GTP-dependent binding of aminoacyl-tRNA to the A-site of ribosomes during protein biosynthesis. This Onchocerca volvulus protein is Elongation factor 1-alpha.